The primary structure comprises 355 residues: S-adenosylmethionine:tRNA ribosyltransferase-isomerase (355 aa).

Belongs to the QueA family. Monomer.

It localises to the cytoplasm. It catalyses the reaction 7-aminomethyl-7-carbaguanosine(34) in tRNA + S-adenosyl-L-methionine = epoxyqueuosine(34) in tRNA + adenine + L-methionine + 2 H(+). It functions in the pathway tRNA modification; tRNA-queuosine biosynthesis. In terms of biological role, transfers and isomerizes the ribose moiety from AdoMet to the 7-aminomethyl group of 7-deazaguanine (preQ1-tRNA) to give epoxyqueuosine (oQ-tRNA). The protein is S-adenosylmethionine:tRNA ribosyltransferase-isomerase of Erwinia tasmaniensis (strain DSM 17950 / CFBP 7177 / CIP 109463 / NCPPB 4357 / Et1/99).